The primary structure comprises 161 residues: UPF0178 protein BruAb1_1955 (161 aa).

It belongs to the UPF0178 family.

The protein is UPF0178 protein BruAb1_1955 of Brucella abortus biovar 1 (strain 9-941).